We begin with the raw amino-acid sequence, 38 residues long: L-amino-acid oxidase (38 aa).

Belongs to the flavin monoamine oxidase family. FIG1 subfamily. In terms of assembly, homodimer; non-covalently linked. FAD is required as a cofactor. Post-translationally, N-glycosylated. In terms of tissue distribution, expressed by the venom gland.

Its subcellular location is the secreted. It catalyses the reaction an L-alpha-amino acid + O2 + H2O = a 2-oxocarboxylate + H2O2 + NH4(+). The catalysed reaction is L-leucine + O2 + H2O = 4-methyl-2-oxopentanoate + H2O2 + NH4(+). It carries out the reaction L-phenylalanine + O2 + H2O = 3-phenylpyruvate + H2O2 + NH4(+). The enzyme catalyses L-tryptophan + O2 + H2O = indole-3-pyruvate + H2O2 + NH4(+). It catalyses the reaction L-methionine + O2 + H2O = 4-methylsulfanyl-2-oxobutanoate + H2O2 + NH4(+). The catalysed reaction is L-arginine + O2 + H2O = 5-guanidino-2-oxopentanoate + H2O2 + NH4(+). It carries out the reaction L-2-aminohexanoate + O2 + H2O = 2-oxohexanoate + H2O2 + NH4(+). The enzyme catalyses L-2-aminopentanoate + O2 + H2O = 2-oxopentanoate + H2O2 + NH4(+). It catalyses the reaction L-tyrosine + O2 + H2O = 3-(4-hydroxyphenyl)pyruvate + H2O2 + NH4(+). Catalyzes an oxidative deamination of predominantly hydrophobic and aromatic L-amino acids, thus producing hydrogen peroxide that may contribute to the diverse toxic effects of this enzyme. Is very active against L-Phe and L-Tyr, moderately active against L-Trp, L-Met, L-Leu, L-norleucine (L-2-aminohexanoate), L-Arg and L-norvaline (L-2-aminopentanoate), and slightly active against L-His, L-cystine, and L-Ile. L-Gln, L-Lys, L-Asn, L-ornithine, L-Ala and L-Val are oxidized very slowly. Exhibits diverse biological activities, such as hemorrhage, hemolysis, edema, apoptosis of vascular endothelial cells or tumor cell lines, antibacterial and antiparasitic activities. This protein inhibits both agonist- and shear stress-induced platelet aggregation (SIPA). Effects of snake L-amino oxidases on platelets are controversial, since they either induce aggregation or inhibit agonist-induced aggregation. These different effects are probably due to different experimental conditions. The polypeptide is L-amino-acid oxidase (Naja kaouthia (Monocled cobra)).